We begin with the raw amino-acid sequence, 309 residues long: Porphobilinogen deaminase (309 aa).

At cysteine 241 the chain carries S-(dipyrrolylmethanemethyl)cysteine.

This sequence belongs to the HMBS family. In terms of assembly, monomer. Requires dipyrromethane as cofactor.

It carries out the reaction 4 porphobilinogen + H2O = hydroxymethylbilane + 4 NH4(+). The protein operates within porphyrin-containing compound metabolism; protoporphyrin-IX biosynthesis; coproporphyrinogen-III from 5-aminolevulinate: step 2/4. Functionally, tetrapolymerization of the monopyrrole PBG into the hydroxymethylbilane pre-uroporphyrinogen in several discrete steps. This Bacillus thuringiensis (strain Al Hakam) protein is Porphobilinogen deaminase.